Consider the following 358-residue polypeptide: Probable G-protein coupled receptor 25 (358 aa).

Residues 1–43 (MQSTEPWSPSWGTLSWDYSGSGSLDQVELCPAWNLPYGHAIIP) are Extracellular-facing. A helical membrane pass occupies residues 44–64 (ALYLAAFAVGLPGNAFVVWLL). The Cytoplasmic portion of the chain corresponds to 65–76 (SRQRGPRRLVDT). The chain crosses the membrane as a helical span at residues 77–97 (FVLHLAAADLGFVLTLPLWAA). Residues 98-113 (AEARGGLWPFGDGLCK) are Extracellular-facing. Residues Cys-112 and Cys-191 are joined by a disulfide bond. A helical transmembrane segment spans residues 114-134 (VSSFALAVTRCAGALLLAGMS). Residues 135-155 (VDRYLAVGRPLSARPLRSARC) are Cytoplasmic-facing. A helical transmembrane segment spans residues 156–176 (VRAVCGAAWAAAFLAGLPALL). Over 177-200 (YRGLQPSLDGVGSQCAEEPWEALQ) the chain is Extracellular. Residues 201-221 (GVGLLLLLLTFALPLAVTLIC) traverse the membrane as a helical segment. The Cytoplasmic segment spans residues 222–239 (YWRVSRRLPRVGRARSNS). The chain crosses the membrane as a helical span at residues 240–260 (LRIIFTVESVFVGCWLPFGVL). At 261–284 (RSLFHLARLQALPLPCSLLLALRW) the chain is on the extracellular side. Residues 285-307 (GLTVTTCLAFVNSSANPVIYLLL) traverse the membrane as a helical segment. The Cytoplasmic segment spans residues 308–358 (DRSFRARARFGLCARAGRQVRRISSASSLSRDDSSVFRGRSPKVNSASATW). Positions 339–358 (DDSSVFRGRSPKVNSASATW) are disordered.

This sequence belongs to the G-protein coupled receptor 1 family.

It localises to the membrane. In terms of biological role, orphan receptor. The sequence is that of Probable G-protein coupled receptor 25 (Gpr25) from Mus musculus (Mouse).